The primary structure comprises 105 residues: UPF0060 membrane protein Reut_B3679 (105 aa).

Transmembrane regions (helical) follow at residues Ile4–Trp24, Gly28–Leu48, Ala60–Val80, and Pro82–Phe102.

The protein belongs to the UPF0060 family.

It is found in the cell inner membrane. In Cupriavidus pinatubonensis (strain JMP 134 / LMG 1197) (Cupriavidus necator (strain JMP 134)), this protein is UPF0060 membrane protein Reut_B3679.